The primary structure comprises 70 residues: Beta-defensin 107A (70 aa).

An N-terminal signal peptide occupies residues 1 to 26 (MPGAMKIFFFIFAALILLAQIFQART). Cystine bridges form between C41-C55 and C45-C64.

This sequence belongs to the beta-defensin family.

It localises to the secreted. Has antibacterial activity. This is Beta-defensin 107A (DEFB107A) from Pan troglodytes (Chimpanzee).